The chain runs to 379 residues: Nematocin receptor 1 (379 aa).

Over histidine 19–methionine 48 the chain is Extracellular. Residue asparagine 32 is glycosylated (N-linked (GlcNAc...) asparagine). A helical membrane pass occupies residues leucine 49–isoleucine 69. Topologically, residues tyrosine 70–aspartate 95 are cytoplasmic. Residues isoleucine 96 to phenylalanine 116 traverse the membrane as a helical segment. The Extracellular segment spans residues tyrosine 117–lysine 124. The cysteines at positions 123 and 196 are disulfide-linked. A helical membrane pass occupies residues leucine 125 to serine 145. At alanine 146 to alanine 168 the chain is on the cytoplasmic side. Residues leucine 169 to phenylalanine 189 form a helical membrane-spanning segment. Residues glutamate 190–glutamine 207 lie on the Extracellular side of the membrane. N-linked (GlcNAc...) asparagine glycosylation occurs at asparagine 199. The chain crosses the membrane as a helical span at residues leucine 208 to leucine 228. Residues tyrosine 229–leucine 289 are Cytoplasmic-facing. The helical transmembrane segment at threonine 290 to isoleucine 310 threads the bilayer. Residues aspartate 311–serine 320 are Extracellular-facing. A glycan (N-linked (GlcNAc...) asparagine) is linked at asparagine 319. A helical transmembrane segment spans residues threonine 321–histidine 343. Residues phenylalanine 344–phenylalanine 379 lie on the Cytoplasmic side of the membrane.

The protein belongs to the G-protein coupled receptor 1 family. Vasopressin/oxytocin receptor subfamily. Detected in the left ASE gustatory neuron, the chemosensory neuron pairs ASH and ADF, and the PQR tail neuron. In males, detected in hook and tail sensory neurons involved in vulval sensing and hermaphrodite contact, and in spicule protractor muscles.

It localises to the cell membrane. In terms of biological role, receptor for nematocin. The activity of this receptor is mediated by G proteins which activate a phosphatidylinositol-calcium second messenger system. The activity of this receptor may be modulated by ntr-2, leading to reduced intracellular cAMP production. Plays a role in gustatory associative learning. Also plays a role in male mating behavior. The protein is Nematocin receptor 1 of Caenorhabditis elegans.